A 487-amino-acid polypeptide reads, in one-letter code: Anthocyanidin 3-O-glucosyltransferase 5 (487 aa).

His-22 (proton acceptor) is an active-site residue. His-22 provides a ligand contact to an anthocyanidin. The active-site Charge relay is Asp-119. Residues Gln-354, His-369, Trp-372, Asn-373, Ser-374, and Glu-377 each contribute to the UDP-alpha-D-glucose site. Residue Ala-392 participates in an anthocyanidin binding. Glu-393 and Gln-394 together coordinate UDP-alpha-D-glucose.

Belongs to the UDP-glycosyltransferase family. In terms of tissue distribution, faintly expressed in cotyledons.

It catalyses the reaction an anthocyanidin + UDP-alpha-D-glucose + H(+) = an anthocyanidin 3-O-beta-D-glucoside + UDP. The protein operates within pigment biosynthesis; anthocyanin biosynthesis. In terms of biological role, in the presence of other necessary color factors, this glycosylation reaction allows the accumulation of anthocyanin pigments. The protein is Anthocyanidin 3-O-glucosyltransferase 5 (GT5) of Manihot esculenta (Cassava).